Consider the following 210-residue polypeptide: MTGLFITLEGPEGAGKSTNRDYLAAQLRAQGVQVLLTREPGGTPLAERVRELLLAPSDEAMSADTELLLVFAARAQHLAEVIRPALARGEVVLCDRFTDATYAYQGGGRGLSHQRIAALEQFVQGDLRPDLTLVFDLPVEIGLSRAAARGRLDRFEQEGRAFFDAVRSTYLERARAEPARYRLVDAAQTLADVQACLDTLLPQLLELQRG.

10 to 17 (GPEGAGKS) contributes to the ATP binding site.

This sequence belongs to the thymidylate kinase family.

It catalyses the reaction dTMP + ATP = dTDP + ADP. Its function is as follows. Phosphorylation of dTMP to form dTDP in both de novo and salvage pathways of dTTP synthesis. This is Thymidylate kinase from Pseudomonas syringae pv. syringae (strain B728a).